A 138-amino-acid polypeptide reads, in one-letter code: Putative nickel-responsive regulator (138 aa).

Residues His-78, His-89, His-91, and Cys-97 each contribute to the Ni(2+) site.

This sequence belongs to the transcriptional regulatory CopG/NikR family. Ni(2+) serves as cofactor.

Transcriptional regulator. The protein is Putative nickel-responsive regulator of Pyrococcus furiosus (strain ATCC 43587 / DSM 3638 / JCM 8422 / Vc1).